A 240-amino-acid polypeptide reads, in one-letter code: MSNPAAVTAGRGSITHVIFDMDGLLLDTEKFYTEVQEIILARFNKKFDWSLKAKMMGRKAIEAARIFVEESGISDSLSAEDFLVERESMLQDLFPTSELMPGASRLIKHLHVKNIPICIATGTHTRHYDLKTQRHRELFSLMHHVVRGDDPEVKQGKPAPDGFLAAARRFKDGPVDSQKVLVFEDAPSGVLAAKNAGMNVVMVPDPRLDISHQDVADQIITSLVDFKPEEWGLPPFEDSN.

The Nucleophile role is filled by D20. Mg(2+) is bound by residues D20, D22, and D185. D22 serves as the catalytic Proton donor.

Belongs to the HAD-like hydrolase superfamily. DOG/GPP family. Mg(2+) is required as a cofactor. As to expression, ubiquitous with highest expression in siliques. Mainly restricted to the meristem of immature flower and vascular elements of the root, shoot, leave, siliqua and developing embryo (at the protein level).

The protein resides in the cytoplasm. It carries out the reaction sn-glycerol 1-phosphate + H2O = glycerol + phosphate. The catalysed reaction is sn-glycerol 3-phosphate + H2O = glycerol + phosphate. In terms of biological role, acts as a glycerol-3-phosphatase with higher stereospecificity for L-glycerol-3-phosphate than DL-glycerol-3-phosphate. The protein is (DL)-glycerol-3-phosphatase 2 (GPP2) of Arabidopsis thaliana (Mouse-ear cress).